Consider the following 431-residue polypeptide: BEL1-like homeodomain protein 5 (431 aa).

The interval 80–96 (PIYLKAAQELLNEIVNV) is SR/KY domain. A BELL domain region spans residues 128–199 (GVAALQMKKA…AVKDMISLQI (72 aa)). The homeobox DNA-binding region spans 228-290 (AWRPQRGLPE…NARVRMWKPL (63 aa)). A compositionally biased stretch (basic and acidic residues) spans 302–312 (EESRKGSDRYS). The disordered stretch occupies residues 302–333 (EESRKGSDRYSTKGSSSKQPYNNTTSNESSNT). Over residues 313–322 (TKGSSSKQPY) the composition is skewed to polar residues. The span at 323–333 (NNTTSNESSNT) shows a compositional bias: low complexity.

This sequence belongs to the TALE/BELL homeobox family. In terms of assembly, may form heterodimeric complexes with TALE/KNOX proteins. Interacts with OFP1.

Its subcellular location is the nucleus. This is BEL1-like homeodomain protein 5 (BLH5) from Arabidopsis thaliana (Mouse-ear cress).